The primary structure comprises 447 residues: Chromosomal replication initiator protein DnaA (447 aa).

The domain I, interacts with DnaA modulators stretch occupies residues 1–66; it reads MSNRIISILK…SKAIKEAYGK (66 aa). Residues 66 to 102 form a domain II region; that stretch reads KNLDYEIVYETTEPEAFNKSNESYKGPLVKKKPLLIS. The tract at residues 103–319 is domain III, AAA+ region; that stretch reads NLNANYTFEN…GVIIKLIVQS (217 aa). 4 residues coordinate ATP: G146, G148, K149, and T150. Positions 320 to 447 are domain IV, binds dsDNA; it reads SINKERIGAA…NTMATSSAAG (128 aa).

This sequence belongs to the DnaA family. As to quaternary structure, oligomerizes as a right-handed, spiral filament on DNA at oriC.

It is found in the cytoplasm. Functionally, plays an essential role in the initiation and regulation of chromosomal replication. ATP-DnaA binds to the origin of replication (oriC) to initiate formation of the DNA replication initiation complex once per cell cycle. Binds the DnaA box (a 9 base pair repeat at the origin) and separates the double-stranded (ds)DNA. Forms a right-handed helical filament on oriC DNA; dsDNA binds to the exterior of the filament while single-stranded (ss)DNA is stabiized in the filament's interior. The ATP-DnaA-oriC complex binds and stabilizes one strand of the AT-rich DNA unwinding element (DUE), permitting loading of DNA polymerase. After initiation quickly degrades to an ADP-DnaA complex that is not apt for DNA replication. Binds acidic phospholipids. The chain is Chromosomal replication initiator protein DnaA from Kosmotoga olearia (strain ATCC BAA-1733 / DSM 21960 / TBF 19.5.1).